The following is an 839-amino-acid chain: Genome polyprotein (839 aa).

Residues 55–66 (TAEVGSHQSEPL) show a composition bias toward polar residues. The disordered stretch occupies residues 55–76 (TAEVGSHQSEPLKTSVDKPGSK). 2 short sequence motifs ((L)YPX(n)L motif) span residues 167–171 (YPHGL) and 200–205 (YPVWEL). Polar residues predominate over residues 496 to 510 (SGGFSTTVSTEQNVP). 2 disordered regions span residues 496–530 (SGGF…NKGK) and 773–792 (GDLE…RFES). The interval 766–836 (MLDRIAGGDL…RKLKGLFSQS (71 aa)) is involved in P1-2A pentamerization. Residues 780–792 (DDPRTDEDRRFES) show a composition bias toward basic and acidic residues.

The protein belongs to the picornaviridae polyprotein family. In terms of assembly, homodimer. Homomultimer; probably interacts with membranes in a multimeric form. Seems to assemble into amyloid-like fibers. As to quaternary structure, homopentamer. Homooligomer. Interacts with capsid protein VP2. Interacts with capsid protein VP3. In terms of assembly, interacts with capsid protein VP1. Interacts with capsid protein VP3. As to quaternary structure, interacts with capsid protein VP1. Interacts with capsid protein VP2. Post-translationally, specific enzymatic cleavages by viral protease in vivo yield a variety of precursors and mature proteins. Polyprotein processing intermediates are produced, such as P1-2A which is a functional precursor of the structural proteins, VP0 which is a VP4-VP2 precursor, VP1-2A precursor, 3ABC precursor which is a stable and catalytically active precursor of 3A, 3B and 3C proteins, 3AB and 3CD precursors. The assembly signal 2A is removed from VP1-2A by a host protease, possibly host Cathepsin L. This cleavage occurs over a region of 3 amino-acids probably generating VP1 proteins with heterogeneous C-termini. During virion maturation, immature virions are rendered infectious following cleavage of VP0 into VP4 and VP2. This maturation seems to be an autocatalytic event triggered by the presence of RNA in the capsid and is followed by a conformational change of the particle. In terms of processing, the assembly signal 2A is removed from VP1-2A by a host protease, possibly host Cathepsin L in naked virions. This cleavage does not occur in enveloped virions. This cleavage occurs over a region of 3 amino-acids probably generating VP1 proteins with heterogeneous C-termini. Post-translationally, unlike other picornaviruses, does not seem to be myristoylated.

The protein resides in the virion. Its subcellular location is the host endosome. The protein localises to the host multivesicular body. It localises to the host membrane. In terms of biological role, capsid proteins VP1, VP2, and VP3 form a closed capsid enclosing the viral positive strand RNA genome. All these proteins contain a beta-sheet structure called beta-barrel jelly roll. Together they form an icosahedral capsid (T=3) composed of 60 copies of each VP1, VP2, and VP3, with a diameter of approximately 300 Angstroms. VP1 is situated at the 12 fivefold axes, whereas VP2 and VP3 are located at the quasi-sixfold axes. The naked capsid interacts with the host receptor HAVCR1 to provide virion attachment to and probably entry into the target cell. VP0 precursor is a component of the immature procapsids. Functionally, plays a role in the assembly of the 12 pentamers into an icosahedral structure. Has not been detected in mature virions, supposedly owing to its small size. Its function is as follows. Precursor component of immature procapsids that corresponds to an extended form of the structural protein VP1. After maturation, possibly by the host Cathepsin L, the assembly signal 2A is cleaved to give rise to the mature VP1 protein. In terms of biological role, affects membrane integrity and causes an increase in membrane permeability. Functions as a viroporin. Affects membrane integrity and causes an increase in membrane permeability. Involved in host intracellular membrane rearrangements probably to give rise to the viral factories. Does not disrupt calcium homeostasis or glycoprotein trafficking. Antagonizes the innate immune response of the host by suppressing IFN-beta synthesis, which it achieves by interfering with the RIG-I/IFIH1 pathway. The chain is Genome polyprotein from Callithrix (Owl-faced monkey).